A 189-amino-acid chain; its full sequence is GTP cyclohydrolase 1 (189 aa).

Cys76, His79, and Cys149 together coordinate Zn(2+).

The protein belongs to the GTP cyclohydrolase I family. In terms of assembly, homomer.

The enzyme catalyses GTP + H2O = 7,8-dihydroneopterin 3'-triphosphate + formate + H(+). Its pathway is cofactor biosynthesis; 7,8-dihydroneopterin triphosphate biosynthesis; 7,8-dihydroneopterin triphosphate from GTP: step 1/1. The protein is GTP cyclohydrolase 1 of Dehalococcoides mccartyi (strain ATCC BAA-2100 / JCM 16839 / KCTC 5957 / BAV1).